Here is a 222-residue protein sequence, read N- to C-terminus: uncharacterized protein (222 aa).

A run of 2 helical transmembrane segments spans residues 22 to 42 (IRVILFIMAICMAMVLLFLYI) and 189 to 209 (AICLALGFFLSIVISVMFCLV).

The protein localises to the cell membrane. This is an uncharacterized protein from Escherichia coli (strain K12).